Consider the following 294-residue polypeptide: Elongation factor Ts (294 aa).

The interval 79-82 (TDFV) is involved in Mg(2+) ion dislocation from EF-Tu.

Belongs to the EF-Ts family.

It localises to the cytoplasm. Associates with the EF-Tu.GDP complex and induces the exchange of GDP to GTP. It remains bound to the aminoacyl-tRNA.EF-Tu.GTP complex up to the GTP hydrolysis stage on the ribosome. This chain is Elongation factor Ts (tsf), found in Geobacillus kaustophilus (strain HTA426).